A 262-amino-acid polypeptide reads, in one-letter code: Probable proteasome subunit beta type-7 (262 aa).

The protein belongs to the peptidase T1B family. As to quaternary structure, the 26S proteasome consists of a 20S proteasome core and two 19S regulatory subunits. The 20S proteasome core is composed of 28 subunits that are arranged in four stacked rings, resulting in a barrel-shaped structure. The two end rings are each formed by seven alpha subunits, and the two central rings are each formed by seven beta subunits. The catalytic chamber with the active sites is on the inside of the barrel.

It is found in the cytoplasm. The protein localises to the nucleus. Non-catalytic component of the proteasome, a multicatalytic proteinase complex which is characterized by its ability to cleave peptides with Arg, Phe, Tyr, Leu, and Glu adjacent to the leaving group at neutral or slightly basic pH. The proteasome has an ATP-dependent proteolytic activity. The sequence is that of Probable proteasome subunit beta type-7 from Schizosaccharomyces pombe (strain 972 / ATCC 24843) (Fission yeast).